Here is a 554-residue protein sequence, read N- to C-terminus: Myo-inositol transporter 1 (554 aa).

Over residues methionine 1–threonine 13 the composition is skewed to polar residues. A disordered region spans residues methionine 1–glutamate 57. 2 N-linked (GlcNAc...) asparagine glycosylation sites follow: asparagine 6 and asparagine 22. Positions serine 15–serine 34 are enriched in low complexity. Residues asparagine 44–glutamate 57 are compositionally biased toward polar residues. A run of 6 helical transmembrane segments spans residues methionine 65 to glycine 85, phenylalanine 110 to alanine 130, isoleucine 144 to alanine 164, phenylalanine 167 to leucine 187, leucine 196 to tryptophan 216, and valine 227 to proline 247. Asparagine 279 is a glycosylation site (N-linked (GlcNAc...) asparagine). A helical membrane pass occupies residues glycine 313–glycine 332. The N-linked (GlcNAc...) asparagine glycan is linked to asparagine 351. A run of 5 helical transmembrane segments spans residues alanine 354 to isoleucine 374, isoleucine 382 to histidine 402, glycine 420 to isoleucine 440, isoleucine 459 to phenylalanine 479, and glycine 490 to leucine 510.

It belongs to the major facilitator superfamily. Sugar transporter (TC 2.A.1.1) family.

Its subcellular location is the cell membrane. The catalysed reaction is myo-inositol(out) + H(+)(out) = myo-inositol(in) + H(+)(in). In terms of biological role, major transporter for myo-inositol. This Candida albicans (strain SC5314 / ATCC MYA-2876) (Yeast) protein is Myo-inositol transporter 1.